A 240-amino-acid chain; its full sequence is Zein-alpha M6 (240 aa).

An N-terminal signal peptide occupies residues 1–21 (MATKIFSLLMLLALSTCVANA).

Belongs to the zein family.

Zeins are major seed storage proteins. This is Zein-alpha M6 from Zea mays (Maize).